Consider the following 372-residue polypeptide: Putative KilA-N domain-containing protein L32 (372 aa).

Basic residues predominate over residues 1 to 12 (MPHKAPKSKLFR). The segment at 1-129 (MPHKAPKSKL…SDNDKSKDNF (129 aa)) is disordered. Basic and acidic residues predominate over residues 14-36 (RYVEDSDDETRGRSRNRSVEKSR). Positions 37-53 (SKSLTRSKSKSPKKSRS) are enriched in basic residues. Over residues 79–120 (EDSEDSEDSESDQDDDKSDNEQSDSELDDSESDDDETDDNES) the composition is skewed to acidic residues. The KilA-N domain maps to 151 to 255 (KFAIGKFGDF…IKIGEWIEEW (105 aa)).

The polypeptide is Putative KilA-N domain-containing protein L32 (Acanthamoeba polyphaga (Amoeba)).